Reading from the N-terminus, the 377-residue chain is MSRGIIIIGSGFAARQLVKNIRKQDAHVPLTLIAADSMDEYNKPDLSHVISQSQRADDLTRQLAGEFAEQFNLRLFPHTWVADIDADAHVVKSQDKQWQYDKLVLATGAAAFVPPIAGRELMLTLNSQQEYRACETQLRDAQRVLIVGGGLIGSELAMDFCRAGKTVTLMDNAASLLASLMPPEVSSRLQHHLTDMGVHLLLKSQLQKLEKTEAGIRATLVSQHSIEVDAVIAATGLRPETALARRAGVAVNRGVCVDSYLQTSHPDIYAIGDCAEINGQVLPFLQPIQLSAMYLAKNLLGGNAPLKLPAMLVKVKTPELPLHLAGETQRSDLSWQITAESDGMIAKGMSGEGQLRAFVVSEDRMKEAFALLKTLSV.

This sequence belongs to the FAD-dependent oxidoreductase family. The cofactor is FAD.

It localises to the cytoplasm. It catalyses the reaction 2 reduced [nitric oxide reductase rubredoxin domain] + NAD(+) + H(+) = 2 oxidized [nitric oxide reductase rubredoxin domain] + NADH. The protein operates within nitrogen metabolism; nitric oxide reduction. Functionally, one of at least two accessory proteins for anaerobic nitric oxide (NO) reductase. Reduces the rubredoxin moiety of NO reductase. In Salmonella enteritidis PT4 (strain P125109), this protein is Nitric oxide reductase FlRd-NAD(+) reductase.